The sequence spans 93 residues: Alpha-defensin 9 (93 aa).

Positions 1-19 (MKTLVLLSALVLLAFQVQA) are cleaved as a signal peptide. A propeptide spanning residues 20 to 58 (DPIQNTDEETKTEEQPGEEDQAVSVSFGDPEGSSLQEES) is cleaved from the precursor. Positions 23–56 (QNTDEETKTEEQPGEEDQAVSVSFGDPEGSSLQE) are disordered. 3 disulfides stabilise this stretch: Cys64–Cys92, Cys66–Cys81, and Cys71–Cys91.

This sequence belongs to the alpha-defensin family. In terms of tissue distribution, paneth cells of the small bowel.

The protein localises to the secreted. In terms of biological role, probably contributes to the antimicrobial barrier function of the small bowel mucosa. The chain is Alpha-defensin 9 (Defa9) from Mus musculus (Mouse).